The primary structure comprises 565 residues: Thiol:disulfide interchange protein DsbD (565 aa).

Residues 1–19 form the signal peptide; sequence MAQRIFTLILLLCSTSVFA. Disulfide bonds link C122–C128 and C182–C304. The next 7 helical transmembrane spans lie at 163–183, 208–228, 243–263, 296–316, 323–343, 357–377, and 384–404; these read LPFS…TPCV, LLTF…GLVV, YVLI…FGLF, IAGL…LLYI, WLGG…LMLI, WMEQ…VFLL, and VWGL…AFIT. Residues 434-565 enclose the Thioredoxin domain; it reads WAFGATHTAQ…FSAHLRDRQP (132 aa). A disulfide bridge connects residues C480 and C483.

The protein belongs to the thioredoxin family. DsbD subfamily.

Its subcellular location is the cell inner membrane. The enzyme catalyses [protein]-dithiol + NAD(+) = [protein]-disulfide + NADH + H(+). The catalysed reaction is [protein]-dithiol + NADP(+) = [protein]-disulfide + NADPH + H(+). Its function is as follows. Required to facilitate the formation of correct disulfide bonds in some periplasmic proteins and for the assembly of the periplasmic c-type cytochromes. Acts by transferring electrons from cytoplasmic thioredoxin to the periplasm. This transfer involves a cascade of disulfide bond formation and reduction steps. This is Thiol:disulfide interchange protein DsbD from Shigella boydii serotype 4 (strain Sb227).